The sequence spans 243 residues: Type III pantothenate kinase (243 aa).

7-14 (DIGNTRLK) lines the ATP pocket. Residues tyrosine 95 and 102-105 (GIDR) contribute to the substrate site. The active-site Proton acceptor is aspartate 104. Threonine 126 lines the ATP pocket. Residue threonine 177 coordinates substrate.

This sequence belongs to the type III pantothenate kinase family. Homodimer. It depends on NH4(+) as a cofactor. The cofactor is K(+).

Its subcellular location is the cytoplasm. The enzyme catalyses (R)-pantothenate + ATP = (R)-4'-phosphopantothenate + ADP + H(+). The protein operates within cofactor biosynthesis; coenzyme A biosynthesis; CoA from (R)-pantothenate: step 1/5. Its function is as follows. Catalyzes the phosphorylation of pantothenate (Pan), the first step in CoA biosynthesis. In Acinetobacter baylyi (strain ATCC 33305 / BD413 / ADP1), this protein is Type III pantothenate kinase.